We begin with the raw amino-acid sequence, 196 residues long: Na(+)-translocating ferredoxin:NAD(+) oxidoreductase complex subunit E (196 aa).

5 helical membrane passes run 38 to 58 (MGMGLATMLVLIGSNVAISAL), 68 to 88 (IPAFVVVIASFVTIVGMLMKA), 92 to 112 (ALDAALGIFIPLIVVNCIILA), 127 to 147 (FADAVGMGLGFTLALTILGSI), and 169 to 189 (VLLMILPPGAFLTLGLLIGLI).

This sequence belongs to the NqrDE/RnfAE family. The complex is composed of six subunits: RnfA, RnfB, RnfC, RnfD, RnfE and RnfG.

The protein localises to the cell membrane. The enzyme catalyses 2 reduced [2Fe-2S]-[ferredoxin] + Na(+)(in) + NAD(+) + H(+) = 2 oxidized [2Fe-2S]-[ferredoxin] + Na(+)(out) + NADH. In terms of biological role, part of a membrane-bound complex that couples electron transfer with translocation of ions across the membrane. Couples electron transfer from reduced ferredoxin to NAD(+) with electrogenic movement of Na(+) out of the cell. Involved in caffeate respiration. The sequence is that of Na(+)-translocating ferredoxin:NAD(+) oxidoreductase complex subunit E from Acetobacterium woodii (strain ATCC 29683 / DSM 1030 / JCM 2381 / KCTC 1655 / WB1).